Here is a 156-residue protein sequence, read N- to C-terminus: ATP synthase subunit b 1 (156 aa).

The helical transmembrane segment at 5 to 27 threads the bilayer; that stretch reads FTLISQAMAFAIFIWFTVRFVWP.

This sequence belongs to the ATPase B chain family. In terms of assembly, F-type ATPases have 2 components, F(1) - the catalytic core - and F(0) - the membrane proton channel. F(1) has five subunits: alpha(3), beta(3), gamma(1), delta(1), epsilon(1). F(0) has three main subunits: a(1), b(2) and c(10-14). The alpha and beta chains form an alternating ring which encloses part of the gamma chain. F(1) is attached to F(0) by a central stalk formed by the gamma and epsilon chains, while a peripheral stalk is formed by the delta and b chains.

It is found in the cell inner membrane. Functionally, f(1)F(0) ATP synthase produces ATP from ADP in the presence of a proton or sodium gradient. F-type ATPases consist of two structural domains, F(1) containing the extramembraneous catalytic core and F(0) containing the membrane proton channel, linked together by a central stalk and a peripheral stalk. During catalysis, ATP synthesis in the catalytic domain of F(1) is coupled via a rotary mechanism of the central stalk subunits to proton translocation. Component of the F(0) channel, it forms part of the peripheral stalk, linking F(1) to F(0). This is ATP synthase subunit b 1 from Nitrosospira multiformis (strain ATCC 25196 / NCIMB 11849 / C 71).